Reading from the N-terminus, the 158-residue chain is SsrA-binding protein (158 aa).

It belongs to the SmpB family.

The protein resides in the cytoplasm. Required for rescue of stalled ribosomes mediated by trans-translation. Binds to transfer-messenger RNA (tmRNA), required for stable association of tmRNA with ribosomes. tmRNA and SmpB together mimic tRNA shape, replacing the anticodon stem-loop with SmpB. tmRNA is encoded by the ssrA gene; the 2 termini fold to resemble tRNA(Ala) and it encodes a 'tag peptide', a short internal open reading frame. During trans-translation Ala-aminoacylated tmRNA acts like a tRNA, entering the A-site of stalled ribosomes, displacing the stalled mRNA. The ribosome then switches to translate the ORF on the tmRNA; the nascent peptide is terminated with the 'tag peptide' encoded by the tmRNA and targeted for degradation. The ribosome is freed to recommence translation, which seems to be the essential function of trans-translation. The protein is SsrA-binding protein of Roseiflexus castenholzii (strain DSM 13941 / HLO8).